Here is a 548-residue protein sequence, read N- to C-terminus: DNA ligase (548 aa).

An ATP-binding site is contributed by Glu-244. The active-site N6-AMP-lysine intermediate is Lys-246. Residues Arg-251, Arg-266, Glu-295, Phe-334, Arg-405, and Lys-411 each coordinate ATP.

This sequence belongs to the ATP-dependent DNA ligase family. It depends on Mg(2+) as a cofactor.

The catalysed reaction is ATP + (deoxyribonucleotide)n-3'-hydroxyl + 5'-phospho-(deoxyribonucleotide)m = (deoxyribonucleotide)n+m + AMP + diphosphate.. In terms of biological role, DNA ligase that seals nicks in double-stranded DNA during DNA replication, DNA recombination and DNA repair. This Methanoculleus marisnigri (strain ATCC 35101 / DSM 1498 / JR1) protein is DNA ligase.